Reading from the N-terminus, the 98-residue chain is Integration host factor subunit alpha (98 aa).

The segment at phenylalanine 49–isoleucine 71 is disordered.

It belongs to the bacterial histone-like protein family. As to quaternary structure, heterodimer of an alpha and a beta chain.

In terms of biological role, this protein is one of the two subunits of integration host factor, a specific DNA-binding protein that functions in genetic recombination as well as in transcriptional and translational control. The protein is Integration host factor subunit alpha of Shewanella oneidensis (strain ATCC 700550 / JCM 31522 / CIP 106686 / LMG 19005 / NCIMB 14063 / MR-1).